The chain runs to 186 residues: CASP-like protein 6 (186 aa).

Residues 1–26 (MKAGAVESGEISKGAPPRKGLIRGLS) lie on the Cytoplasmic side of the membrane. The chain crosses the membrane as a helical span at residues 27 to 47 (IMDFILRIVAAIATLGSALGM). Topologically, residues 48–72 (GTTRQTLPFSTQFVKFRAVFSDVPT) are extracellular. A helical transmembrane segment spans residues 73 to 93 (FVFFVTSNSIVCGYLVLSLVL). The Cytoplasmic portion of the chain corresponds to 94-110 (SFFHIVRSAAVKSRVLQ). Residues 111 to 131 (VFLDTVMYGLLTTGASAATAI) form a helical membrane-spanning segment. Topologically, residues 132-162 (VYEAHYGNSNTNWFPFCRQYNHFCKQISGSL) are extracellular. Residues 163 to 183 (IGSFIAVVLFIILILMSAISI) traverse the membrane as a helical segment. The Cytoplasmic portion of the chain corresponds to 184–186 (SKH).

This sequence belongs to the Casparian strip membrane proteins (CASP) family. As to quaternary structure, homodimer and heterodimers.

The protein resides in the cell membrane. Functionally, regulates membrane-cell wall junctions and localized cell wall deposition. Required for establishment of the Casparian strip membrane domain (CSD) and the subsequent formation of Casparian strips, a cell wall modification of the root endodermis that determines an apoplastic barrier between the intraorganismal apoplasm and the extraorganismal apoplasm and prevents lateral diffusion. The polypeptide is CASP-like protein 6 (Glycine max (Soybean)).